The following is a 26-amino-acid chain: Melittin (26 aa).

Residue Gly-1 is modified to N-formylglycine; partial. Glu-26 is modified (glutamic acid 1-amide).

It belongs to the melittin family. In terms of assembly, monomer (in solution and for integration into membranes), homotetramer (in solution and potentially as a toroidal pore in membranes), and potenially homomultimer (as a toroidal pore in membranes). In terms of tissue distribution, expressed by the venom gland.

The protein resides in the secreted. Its subcellular location is the target cell membrane. In terms of biological role, main toxin of bee venom with strong hemolytic activity and antimicrobial activity. It has enhancing effects on bee venom phospholipase A2 activity. This amphipathic toxin binds to negatively charged membrane surface and forms pore by inserting into lipid bilayers inducing the leakage of ions and molecules and the enhancement of permeability that ultimately leads to cell lysis. It acts as a voltage-gated pore with higher selectivity for anions over cations. The ion conductance has been shown to be voltage-dependent. Self-association of melittin in membranes is promoted by high ionic strength, but not by the presence of negatively charged lipids. In vivo, intradermal injection into healthy human volunteers produce sharp pain sensation and an inflammatory response. It produces pain by activating primary nociceptor cells directly and indirectly due to its ability to activate plasma membrane phospholipase A2 and its pore-forming activity. In Apis dorsata (Giant honeybee), this protein is Melittin (MELT).